The sequence spans 232 residues: Phosphatidylserine decarboxylase proenzyme (232 aa).

Catalysis depends on Ser190, which acts as the Schiff-base intermediate with substrate; via pyruvic acid. Ser190 carries the pyruvic acid (Ser); by autocatalysis modification.

It belongs to the phosphatidylserine decarboxylase family. PSD-A subfamily. In terms of assembly, heterodimer of a large membrane-associated beta subunit and a small pyruvoyl-containing alpha subunit. Pyruvate serves as cofactor. Post-translationally, is synthesized initially as an inactive proenzyme. Formation of the active enzyme involves a self-maturation process in which the active site pyruvoyl group is generated from an internal serine residue via an autocatalytic post-translational modification. Two non-identical subunits are generated from the proenzyme in this reaction, and the pyruvate is formed at the N-terminus of the alpha chain, which is derived from the carboxyl end of the proenzyme. The post-translation cleavage follows an unusual pathway, termed non-hydrolytic serinolysis, in which the side chain hydroxyl group of the serine supplies its oxygen atom to form the C-terminus of the beta chain, while the remainder of the serine residue undergoes an oxidative deamination to produce ammonia and the pyruvoyl prosthetic group on the alpha chain.

The protein resides in the cell membrane. It catalyses the reaction a 1,2-diacyl-sn-glycero-3-phospho-L-serine + H(+) = a 1,2-diacyl-sn-glycero-3-phosphoethanolamine + CO2. The protein operates within phospholipid metabolism; phosphatidylethanolamine biosynthesis; phosphatidylethanolamine from CDP-diacylglycerol: step 2/2. In terms of biological role, catalyzes the formation of phosphatidylethanolamine (PtdEtn) from phosphatidylserine (PtdSer). The protein is Phosphatidylserine decarboxylase proenzyme of Rhizobium leguminosarum bv. trifolii (strain WSM2304).